A 391-amino-acid chain; its full sequence is Putative F-box protein At1g47730 (391 aa).

Residues 1–12 (MEQREEKTENIQ) are compositionally biased toward basic and acidic residues. Residues 1–25 (MEQREEKTENIQRKRSRGKSSSSSL) are disordered. In terms of domain architecture, F-box spans 19-68 (KSSSSSLPLDLTSEIFSRLPAKSVVRFRCVSKLWSSITTAPYFTNSFETR).

In Arabidopsis thaliana (Mouse-ear cress), this protein is Putative F-box protein At1g47730.